Consider the following 120-residue polypeptide: Phosphoribosyl-AMP cyclohydrolase (120 aa).

Residue aspartate 75 coordinates Mg(2+). Zn(2+) is bound at residue cysteine 76. Mg(2+) contacts are provided by aspartate 77 and aspartate 79. 2 residues coordinate Zn(2+): cysteine 92 and cysteine 99.

This sequence belongs to the PRA-CH family. Homodimer. Mg(2+) serves as cofactor. Requires Zn(2+) as cofactor.

Its subcellular location is the cytoplasm. The catalysed reaction is 1-(5-phospho-beta-D-ribosyl)-5'-AMP + H2O = 1-(5-phospho-beta-D-ribosyl)-5-[(5-phospho-beta-D-ribosylamino)methylideneamino]imidazole-4-carboxamide. It functions in the pathway amino-acid biosynthesis; L-histidine biosynthesis; L-histidine from 5-phospho-alpha-D-ribose 1-diphosphate: step 3/9. In terms of biological role, catalyzes the hydrolysis of the adenine ring of phosphoribosyl-AMP. In Haloarcula marismortui (strain ATCC 43049 / DSM 3752 / JCM 8966 / VKM B-1809) (Halobacterium marismortui), this protein is Phosphoribosyl-AMP cyclohydrolase.